We begin with the raw amino-acid sequence, 1067 residues long: Ubiquitin conjugation factor E4 A (1067 aa).

The disordered stretch occupies residues 33 to 57 (KEQLKQQSDELPASPDDSDNSVSES). N6-acetyllysine is present on Lys386. The U-box domain occupies 987–1061 (DACDEFLDPI…QRWLAERKQQ (75 aa)).

It belongs to the ubiquitin conjugation factor E4 family.

The protein localises to the cytoplasm. The enzyme catalyses S-ubiquitinyl-[E2 ubiquitin-conjugating enzyme]-L-cysteine + [acceptor protein]-L-lysine = [E2 ubiquitin-conjugating enzyme]-L-cysteine + N(6)-ubiquitinyl-[acceptor protein]-L-lysine.. The protein operates within protein modification; protein ubiquitination. Functionally, ubiquitin-protein ligase that probably functions as an E3 ligase in conjunction with specific E1 and E2 ligases. May also function as an E4 ligase mediating the assembly of polyubiquitin chains on substrates ubiquitinated by another E3 ubiquitin ligase. Mediates 'Lys-48'-linked polyubiquitination of substrates. The protein is Ubiquitin conjugation factor E4 A of Bos taurus (Bovine).